Reading from the N-terminus, the 314-residue chain is tRNA dimethylallyltransferase (314 aa).

Residues 1 to 24 are disordered; the sequence is MAEEPQRSPAPTSPFAFTVPSNPL. 40-47 contributes to the ATP binding site; sequence GPTASGKS. A substrate-binding site is contributed by 42–47; that stretch reads TASGKS.

The protein belongs to the IPP transferase family. In terms of assembly, monomer. The cofactor is Mg(2+).

The catalysed reaction is adenosine(37) in tRNA + dimethylallyl diphosphate = N(6)-dimethylallyladenosine(37) in tRNA + diphosphate. Functionally, catalyzes the transfer of a dimethylallyl group onto the adenine at position 37 in tRNAs that read codons beginning with uridine, leading to the formation of N6-(dimethylallyl)adenosine (i(6)A). In Cereibacter sphaeroides (strain ATCC 17029 / ATH 2.4.9) (Rhodobacter sphaeroides), this protein is tRNA dimethylallyltransferase.